We begin with the raw amino-acid sequence, 174 residues long: F-box protein At1g70360 (174 aa).

The region spanning 136 to 174 is the F-box domain; the sequence is PPCFISLPRELKHKILESLPGVDIGTLACVSSELRDMAS.

This is F-box protein At1g70360 from Arabidopsis thaliana (Mouse-ear cress).